We begin with the raw amino-acid sequence, 502 residues long: Keratin, type II microfibrillar, component 5 (502 aa).

Serine 1 carries the post-translational modification Blocked amino end (Ser). Residues 1–122 (SCRSYRISPG…PNAQCVKHQE (122 aa)) form a head region. The 312-residue stretch at 122 to 433 (EKEQIKNLNS…RLLEGEEQRL (312 aa)) folds into the IF rod domain. The tract at residues 123-157 (KEQIKNLNSRFAAFIDKVRFLEQQNKLLETKWQFY) is coil 1A. The segment at 158-167 (QNQRCCESNL) is linker 1. Positions 168–268 (EPLFNGYIET…YDEEIQILNA (101 aa)) are coil 1B. A Glycyl lysine isopeptide (Lys-Gly) (interchain with G-Cter in SUMO1) cross-link involves residue lysine 228. The linker 12 stretch occupies residues 269-285 (HISDTSVIVKMDNSRDL). Residues 286-429 (NMDCVVAEIK…ATYRRLLEGE (144 aa)) are coil 2. Residues 430-502 (EQRLCEGVGS…CGSSRSVRFA (73 aa)) form a tail region.

It belongs to the intermediate filament family. As to expression, hard keratin wool.

In terms of biological role, wool microfibrillar keratin. The protein is Keratin, type II microfibrillar, component 5 of Ovis aries (Sheep).